Reading from the N-terminus, the 413-residue chain is Aspartate kinase (413 aa).

2 ACT domains span residues 267 to 341 (LTIR…GDTK) and 347 to 413 (IVGV…RQGE).

Belongs to the aspartokinase family. In terms of assembly, homotrimer. In the presence of inhibitory amino acids the Stokes radius of the protein increases, suggesting its oligomeric state may change.

It localises to the cytoplasm. It carries out the reaction L-aspartate + ATP = 4-phospho-L-aspartate + ADP. Its pathway is amino-acid biosynthesis; L-lysine biosynthesis via DAP pathway; (S)-tetrahydrodipicolinate from L-aspartate: step 1/4. It participates in amino-acid biosynthesis; L-methionine biosynthesis via de novo pathway; L-homoserine from L-aspartate: step 1/3. It functions in the pathway amino-acid biosynthesis; L-threonine biosynthesis; L-threonine from L-aspartate: step 1/5. Its activity is regulated as follows. Activated by L-lysine, L-methionine, and L-isoleucine. L-threonine, at low concentrations, is a mild activator and has a weak inhibitory effect only at concentrations over 10 mM. Strongly feedback inhibited by the concerted combination of L-lysine and L-threonine and slightly feedback inhibited by the concerted combination of L-threonine and L-methionine. Activated by the combination of L-methionine and L-lysine, L-methionine and L-isoleucine and L-lysine and L-isoleucine. Involved in the biosynthesis of L-aspartate-beta-semialdehyde which is a central intermediate in the biosynthesis of different amino acids (L-lysine, L-methionine, L-threonine). Catalyzes the phosphorylation of the beta-carboxyl group of L-aspartate to yield 4-phospho-L-aspartate. The polypeptide is Aspartate kinase (Pseudomonas fluorescens (strain SBW25)).